The primary structure comprises 156 residues: Small ribosomal subunit protein uS7 (156 aa).

This sequence belongs to the universal ribosomal protein uS7 family. In terms of assembly, part of the 30S ribosomal subunit. Contacts proteins S9 and S11.

In terms of biological role, one of the primary rRNA binding proteins, it binds directly to 16S rRNA where it nucleates assembly of the head domain of the 30S subunit. Is located at the subunit interface close to the decoding center, probably blocks exit of the E-site tRNA. The sequence is that of Small ribosomal subunit protein uS7 from Oceanobacillus iheyensis (strain DSM 14371 / CIP 107618 / JCM 11309 / KCTC 3954 / HTE831).